A 353-amino-acid chain; its full sequence is Phospho-N-acetylmuramoyl-pentapeptide-transferase (353 aa).

The next 10 helical transmembrane spans lie at 24–44 (LGFF…ILWA), 66–86 (TPTM…LLCA), 88–108 (LGNP…FVGF), 129–149 (FGML…KGLD), 160–180 (PLFE…FLSA), 192–212 (GLAS…VYVA), 229–249 (VGEL…FLWY), 256–276 (VFMG…NAIV), 281–301 (ILLV…ILQV), and 330–350 (KVIV…LLSL).

This sequence belongs to the glycosyltransferase 4 family. MraY subfamily. Mg(2+) serves as cofactor.

The protein resides in the cell inner membrane. The enzyme catalyses UDP-N-acetyl-alpha-D-muramoyl-L-alanyl-gamma-D-glutamyl-meso-2,6-diaminopimeloyl-D-alanyl-D-alanine + di-trans,octa-cis-undecaprenyl phosphate = di-trans,octa-cis-undecaprenyl diphospho-N-acetyl-alpha-D-muramoyl-L-alanyl-D-glutamyl-meso-2,6-diaminopimeloyl-D-alanyl-D-alanine + UMP. Its pathway is cell wall biogenesis; peptidoglycan biosynthesis. In terms of biological role, catalyzes the initial step of the lipid cycle reactions in the biosynthesis of the cell wall peptidoglycan: transfers peptidoglycan precursor phospho-MurNAc-pentapeptide from UDP-MurNAc-pentapeptide onto the lipid carrier undecaprenyl phosphate, yielding undecaprenyl-pyrophosphoryl-MurNAc-pentapeptide, known as lipid I. The protein is Phospho-N-acetylmuramoyl-pentapeptide-transferase of Helicobacter acinonychis (strain Sheeba).